Reading from the N-terminus, the 629-residue chain is tRNA uridine 5-carboxymethylaminomethyl modification enzyme MnmG (629 aa).

Residues 13-18, V125, and S180 each bind FAD; that span reads GGGHAG. An NAD(+)-binding site is contributed by 273-287; the sequence is GPRYCPSIEDKVMRF. Q370 is a binding site for FAD.

This sequence belongs to the MnmG family. In terms of assembly, homodimer. Heterotetramer of two MnmE and two MnmG subunits. FAD serves as cofactor.

The protein resides in the cytoplasm. Functionally, NAD-binding protein involved in the addition of a carboxymethylaminomethyl (cmnm) group at the wobble position (U34) of certain tRNAs, forming tRNA-cmnm(5)s(2)U34. The chain is tRNA uridine 5-carboxymethylaminomethyl modification enzyme MnmG from Salmonella typhi.